Consider the following 106-residue polypeptide: uncharacterized protein (106 aa).

It belongs to the HesB/IscA family.

This is an uncharacterized protein from Bradyrhizobium diazoefficiens (strain JCM 10833 / BCRC 13528 / IAM 13628 / NBRC 14792 / USDA 110).